The following is a 1346-amino-acid chain: Adhesion G protein-coupled receptor F5 (1346 aa).

Residues 1–21 (MKSPRRTTLCLMFIVIYSSKA) form the signal peptide. At 22–1006 (ALNWNYESTI…MSPDSPDPSS (985 aa)) the chain is on the extracellular side. Asn-73, Asn-94, Asn-106, Asn-188, Asn-256, Asn-272, Asn-301, Asn-315, Asn-328, Asn-398, Asn-472, Asn-487, Asn-505, Asn-540, Asn-627, Asn-649, Asn-666, Asn-820, Asn-931, Asn-963, and Asn-982 each carry an N-linked (GlcNAc...) asparagine glycan. Residues 166–273 (LQEDVTLNMR…NSFQAVTINE (108 aa)) enclose the SEA domain. Ig-like domains follow at residues 267-368 (QAVT…IDVM), 369-466 (PIQI…IKVT), and 471-561 (ANLT…KDVI). 2 disulfide bridges follow: Cys-293/Cys-350 and Cys-391/Cys-449. The cysteines at positions 492 and 545 are disulfide-linked. A GAIN-B domain is found at 842 to 1003 (PPLSFSQTNV…SILMSPDSPD (162 aa)). 2 cysteine pairs are disulfide-bonded: Cys-954–Cys-985 and Cys-973–Cys-987. Positions 954–1003 (CVFWNFRLANNTGGWDSSGCYVEEGDGDNVTCICDHLTSFSILMSPDSPD) are GPS. The interval 991 to 1006 (TSFSILMSPDSPDPSS) is tethered agonist. Residues 1007-1027 (LLGILLDIISYVGVGFSILSL) form a helical membrane-spanning segment. The Cytoplasmic segment spans residues 1028-1053 (AACLVVEAVVWKSVTKNRTSYMRHTC). The chain crosses the membrane as a helical span at residues 1054–1074 (IVNIAASLLVANTWFIVVAAI). Residues 1075–1090 (QDNRYILCKTACVAAT) are Extracellular-facing. The helical transmembrane segment at 1091–1111 (FFIHFFYLSVFFWMLTLGLML) threads the bilayer. The Cytoplasmic segment spans residues 1112-1128 (FYRLVFILHETSRSTQK). Residues 1129 to 1149 (AIAFCLGYGCPLAISVITLGA) traverse the membrane as a helical segment. The Extracellular segment spans residues 1150–1173 (TQPREVYTRKNVCWLNWEDTKALL). The chain crosses the membrane as a helical span at residues 1174-1194 (AFAIPALIIVVVNITITIVVI). At 1195-1220 (TKILRPSIGDKPCKQEKSSLFQISKS) the chain is on the cytoplasmic side. Residues 1221 to 1241 (IGVLTPLLGLTWGFGLTTVFP) traverse the membrane as a helical segment. The Extracellular portion of the chain corresponds to 1242–1244 (GTN). Residues 1245 to 1265 (LVFHIIFAILNVFQGLFILLF) form a helical membrane-spanning segment. Over 1266 to 1346 (GCLWDLKVQE…NSSSASSLLN (81 aa)) the chain is Cytoplasmic. Thr-1300 carries the phosphothreonine modification. The residue at position 1307 (Ser-1307) is a Phosphoserine. The interval 1327-1346 (TPEATSSSLENSSSASSLLN) is disordered. The segment covering 1329–1346 (EATSSSLENSSSASSLLN) has biased composition (low complexity).

The protein belongs to the G-protein coupled receptor 2 family. Adhesion G-protein coupled receptor (ADGR) subfamily. As to quaternary structure, homodimer; disulfide-linked. Heterodimer of 2 chains generated by proteolytic processing; the large extracellular N-terminal fragment and the membrane-bound C-terminal fragment predominantly remain associated and non-covalently linked. Fragment generates by the processing enzyme furin remains attached to the extracellular N-terminal fragment. Interacts (via N-terminal extracellular domain) with SFTPD. In terms of processing, highly glycosylated. Post-translationally, proteolytically cleaved at multiple sites: one in the GPS region of the GAIN-B domain (S1 site) and the other in the SEA domain (S2 site). The proteolytic cleavage at S1 site generates an extracellular subunit and a seven-transmembrane subunit. The proteolytic cleavage at S2 site generates a fragment that undergoes proteolytic cleavage by the processing enzyme furin. In terms of tissue distribution, expressed in lung endothelial cells and in alveolar type II (ATII) cells (at protein level). Expressed high levels in subcutaneous adipose tissue in lean individuals and at lower levels in visceral fat. Expression levels in subcutaneous adipose tissue drastically drop in obese individuals.

It is found in the cell membrane. Its activity is regulated as follows. As an adhesion G protein-coupled receptor (aGPCR) exhibits a large N-terminal extracellular domain containing highly conserved GPCR autoproteolysis-inducing (GAIN) domain. During synthesis, intracellular autoproteolytic processing of nascent chain within the GAIN domain generates a mature protein, consisting of an N-terminal fragment that is non-covalently linked to the C-terminal fragment. The mature protein is routed to the plasma membrane where the N- and C-terminal fragments remain associated, forming the holoreceptor. Dissociation of the aGPCR fragments stimulates G protein signaling through the action of the tethered-peptide agonist stalk that is occluded within the GAIN domain in the holoreceptor form. This dissociation might be induced by ligand binding, such as that of sFNDC4. Adhesion G protein-coupled receptor. In alveolar type II (ATII or AT2) cells, required for normal lung surfactant homeostasis. Modulation of both surfactant secretion and uptake by ATII cells is mediated by the downstream activation of GNAQ/GNA11 proteins and may be a consequence of increased cortical F-actin assembly induced by ADGRF5 activation. In the kidney, may play a role in the regulation of acid excretion into the primary urine, possibly by regulating the surface expression of V-ATPase proton pump. As a receptor for soluble FNDC4 (sFNDC4), required for proper systemic glucose tolerance, specifically sensitizing white adipose tissue to insulin. Also plays a role in sFNDC4-induced decrease of local inflammation in white adipose tissue. This is Adhesion G protein-coupled receptor F5 from Homo sapiens (Human).